The primary structure comprises 485 residues: uncharacterized protein (485 aa).

Helical transmembrane passes span 79 to 99, 117 to 137, 139 to 159, 170 to 190, 199 to 219, 275 to 295, 313 to 333, 355 to 375, 380 to 400, 421 to 441, and 448 to 468; these read LVTLGATLYTLGILFGNLIFA, VFALLQIPIALSVNLAMFLVF, FFSGLFGSVGLSNGSGSLADL, VIYFTVLSIGPGIAPIISGFI, WEFWILLILSGFNLFWAFLLL, ILICVACTIGSIYGMINLVLI, GLMYISITLGLFSAVFIAMPI, LPMGFIGITLFEIGILLFGWT, IFWFVPTIGSAIMGGGYIMTS, GVKIFQLLFGAIFPLFAESLF, and WGCTLLAFILLACGCSLPILF.

Belongs to the major facilitator superfamily. CAR1 family.

It localises to the membrane. This is an uncharacterized protein from Schizosaccharomyces pombe (strain 972 / ATCC 24843) (Fission yeast).